A 269-amino-acid chain; its full sequence is GTP cyclohydrolase FolE2 (269 aa).

It belongs to the GTP cyclohydrolase IV family.

The catalysed reaction is GTP + H2O = 7,8-dihydroneopterin 3'-triphosphate + formate + H(+). The protein operates within cofactor biosynthesis; 7,8-dihydroneopterin triphosphate biosynthesis; 7,8-dihydroneopterin triphosphate from GTP: step 1/1. Functionally, converts GTP to 7,8-dihydroneopterin triphosphate. The sequence is that of GTP cyclohydrolase FolE2 from Burkholderia thailandensis (strain ATCC 700388 / DSM 13276 / CCUG 48851 / CIP 106301 / E264).